We begin with the raw amino-acid sequence, 305 residues long: UPF0282 protein Tneu_0934 (305 aa).

The protein belongs to the UPF0282 family.

This chain is UPF0282 protein Tneu_0934, found in Pyrobaculum neutrophilum (strain DSM 2338 / JCM 9278 / NBRC 100436 / V24Sta) (Thermoproteus neutrophilus).